A 508-amino-acid polypeptide reads, in one-letter code: DNA-directed RNA polymerase subunit Rpo1C (508 aa).

Residues 1-123 are unknown; it reads MIIWKDTAKN…REKYEYEKKV (123 aa). The DNA-directed RNA polymerase subunit Rpo1C stretch occupies residues 124–508; that stretch reads SSQVLDVIAE…IYKGYPKTKK (385 aa).

The protein belongs to the RNA polymerase beta' chain family. Part of the RNA polymerase complex.

The protein localises to the cytoplasm. The enzyme catalyses RNA(n) + a ribonucleoside 5'-triphosphate = RNA(n+1) + diphosphate. In terms of biological role, DNA-dependent RNA polymerase (RNAP) catalyzes the transcription of DNA into RNA using the four ribonucleoside triphosphates as substrates. Forms part of the jaw domain. The sequence is that of DNA-directed RNA polymerase subunit Rpo1C from Thermoplasma volcanium (strain ATCC 51530 / DSM 4299 / JCM 9571 / NBRC 15438 / GSS1).